Reading from the N-terminus, the 345-residue chain is UDP-N-acetylenolpyruvoylglucosamine reductase (345 aa).

The FAD-binding PCMH-type domain maps to 25-193; that stretch reads LPAHCTDFVS…VGVTFLLPKA (169 aa). The active site involves R169. S237 serves as the catalytic Proton donor. E333 is a catalytic residue.

The protein belongs to the MurB family. Requires FAD as cofactor.

It localises to the cytoplasm. The catalysed reaction is UDP-N-acetyl-alpha-D-muramate + NADP(+) = UDP-N-acetyl-3-O-(1-carboxyvinyl)-alpha-D-glucosamine + NADPH + H(+). Its pathway is cell wall biogenesis; peptidoglycan biosynthesis. In terms of biological role, cell wall formation. This chain is UDP-N-acetylenolpyruvoylglucosamine reductase, found in Pseudoalteromonas atlantica (strain T6c / ATCC BAA-1087).